The following is a 474-amino-acid chain: N-lysine methyltransferase SETD6 (474 aa).

S14 carries the post-translational modification Phosphoserine. The region spanning 63-287 (PKVLVSRQGT…KGHEIFNTYG (225 aa)) is the SET domain. K64 is subject to N6-methylated lysine; by autocatalysis. 74 to 76 (AGY) provides a ligand contact to S-adenosyl-L-methionine. W123 contributes to the substrate binding site. Residue K180 is modified to N6-methylated lysine; by autocatalysis. Y224 contacts S-adenosyl-L-methionine. Substrate contacts are provided by S225 and Q227. S-adenosyl-L-methionine contacts are provided by residues 252–253 (NH) and Y298. Residue K373 is modified to N6-methylated lysine; by autocatalysis.

It belongs to the class V-like SAM-binding methyltransferase superfamily. Histone-lysine methyltransferase family. SETD6 subfamily. Monomer, homodimer and homotrimer; these structures are stabilized in the presence of S-adenosyl-L-methionine (SAM). Automethylated.

It is found in the nucleus. It catalyses the reaction L-lysyl-[protein] + S-adenosyl-L-methionine = N(6)-methyl-L-lysyl-[protein] + S-adenosyl-L-homocysteine + H(+). The catalysed reaction is L-lysyl(8)-[histone H2AZ] + S-adenosyl-L-methionine = N(6)-methyl-L-lysyl(8)-[histone H2AZ] + S-adenosyl-L-homocysteine + H(+). Protein-lysine N-methyltransferase. Monomethylates 'Lys-310' of the RELA subunit of NF-kappa-B complex, leading to down-regulation of NF-kappa-B transcription factor activity. Monomethylates 'Lys-8' of H2AZ (H2AZK8me1). Required for the maintenance of embryonic stem cell self-renewal. Methylates PAK4. This Rattus norvegicus (Rat) protein is N-lysine methyltransferase SETD6 (Setd6).